Reading from the N-terminus, the 225-residue chain is Golgi to ER traffic protein 1 (225 aa).

Met-1 is a topological domain (lumenal). A helical membrane pass occupies residues 2–21; sequence NWVIIAALFFVIINKLLQYT. Over 22–107 the chain is Cytoplasmic; it reads SRYQEAWINK…SQSKLFNRLK (86 aa). A coiled-coil region spans residues 37–104; that stretch reads DISSLSKEYS…AKDSQSKLFN (68 aa). The helical transmembrane segment at 108 to 128 threads the bilayer; it reads LLTLTLPFMILKLWKGKFIVY. Over 129–172 the chain is Lumenal; the sequence is DIPTKDTFPVIVNGVLSQGLLYIPLLPINFLRGIDPNKHILVPG. A helical membrane pass occupies residues 173–189; it reads VSLGIWLMALTKTIDTV. Topologically, residues 190–225 are cytoplasmic; sequence EFIVKQLVFQPVVSKQVKEKTKEKVVELKTTEAELD.

The protein belongs to the WRB/GET1 family. In terms of assembly, component of the Golgi to ER traffic (GET) complex, which is composed of GET1, GET2 and GET3. Within the complex, GET1 and GET2 form a heterotetramer which is stabilized by phosphatidylinositol binding and which binds to the GET3 homodimer.

The protein localises to the endoplasmic reticulum membrane. It is found in the golgi apparatus membrane. Functionally, required for the post-translational delivery of tail-anchored (TA) proteins to the endoplasmic reticulum. Together with GET2, acts as a membrane receptor for soluble GET3, which recognizes and selectively binds the transmembrane domain of TA proteins in the cytosol. The GET complex cooperates with the HDEL receptor ERD2 to mediate the ATP-dependent retrieval of resident ER proteins that contain a C-terminal H-D-E-L retention signal from the Golgi to the ER. The chain is Golgi to ER traffic protein 1 from Vanderwaltozyma polyspora (strain ATCC 22028 / DSM 70294 / BCRC 21397 / CBS 2163 / NBRC 10782 / NRRL Y-8283 / UCD 57-17) (Kluyveromyces polysporus).